The sequence spans 205 residues: High frequency lysogenization protein HflD homolog (205 aa).

The protein belongs to the HflD family.

It is found in the cytoplasm. The protein resides in the cell inner membrane. This is High frequency lysogenization protein HflD homolog from Shewanella baltica (strain OS155 / ATCC BAA-1091).